The chain runs to 255 residues: Chlorocatechol 1,2-dioxygenase (255 aa).

Residues Tyr130, Tyr164, His188, and His190 each contribute to the Fe cation site.

This sequence belongs to the intradiol ring-cleavage dioxygenase family. It depends on Fe(3+) as a cofactor.

The catalysed reaction is 3,5-dichlorocatechol + O2 = (2E,4E)-2,4-dichloromuconate + 2 H(+). It participates in aromatic compound metabolism; 3-chlorocatechol degradation. In terms of biological role, preferentially converts 3,5-dichlorocatechol as opposed to other chlorinated catechols. Retains diminished activity toward non-chlorinated substrates. The polypeptide is Chlorocatechol 1,2-dioxygenase (tfdC) (Burkholderia cepacia (Pseudomonas cepacia)).